Consider the following 68-residue polypeptide: KDGYPMVRAGREKGCKIWCVINNESCDSECKIRKGKKGYCYFWKLACYCEGLPANEQVWTYEKNTCKP.

The LCN-type CS-alpha/beta domain maps to 1–67 (KDGYPMVRAG…VWTYEKNTCK (67 aa)). 4 cysteine pairs are disulfide-bonded: C15–C66, C19–C40, C26–C47, and C30–C49.

The protein belongs to the long (4 C-C) scorpion toxin superfamily. Sodium channel inhibitor family. Beta subfamily. As to expression, expressed by the venom gland.

Its subcellular location is the secreted. In terms of biological role, beta toxins bind voltage-independently at site-4 of sodium channels (Nav) and shift the voltage of activation toward more negative potentials thereby affecting sodium channel activation and promoting spontaneous and repetitive firing. Is toxic to both insect and mammals. Induces paralysis in Acheta domestica crickets, but does not induce death, whereas intracerebroventricular injection into mice causes immediate death (at a dose of 0.05 ug/g). The protein is Beta-toxin Im-2 of Isometrus maculatus (Lesser brown scorpion).